A 279-amino-acid chain; its full sequence is Phosphate import ATP-binding protein PstB 2 (279 aa).

Positions 34–274 constitute an ABC transporter domain; that stretch reads FDIENLDLYY…PSDDRTRGYV (241 aa). 66–73 contributes to the ATP binding site; the sequence is GPSGCGKS.

This sequence belongs to the ABC transporter superfamily. Phosphate importer (TC 3.A.1.7) family. As to quaternary structure, the complex is composed of two ATP-binding proteins (PstB), two transmembrane proteins (PstC and PstA) and a solute-binding protein (PstS).

Its subcellular location is the cell inner membrane. The enzyme catalyses phosphate(out) + ATP + H2O = ADP + 2 phosphate(in) + H(+). Functionally, part of the ABC transporter complex PstSACB involved in phosphate import. Responsible for energy coupling to the transport system. The chain is Phosphate import ATP-binding protein PstB 2 from Vibrio vulnificus (strain YJ016).